We begin with the raw amino-acid sequence, 628 residues long: Venom redulysin 1 (628 aa).

Residues 1-19 (MSKLWLLLLLVAAFQAVHS) form the signal peptide. The propeptide occupies 20-368 (YPAAESDYLE…EDDVAESDEE (349 aa)). The tract at residues 290–313 (DYEEEEEEEEEEEFELEEDYEEDP) is disordered. The segment covering 291 to 313 (YEEEEEEEEEEEFELEEDYEEDP) has biased composition (acidic residues).

It belongs to the redulysin-like family. In terms of processing, contains 5 disulfide bonds. In terms of tissue distribution, expressed by the venom gland (posterior main gland) (at protein level).

It is found in the secreted. In terms of biological role, highly abundant protein that may be responsible for the observed disruption of sensory neuron membranes, since it is homologous to proteins such as trialysin, which forms pores in lipid bilayers. Probable insecticidal toxin. The chain is Venom redulysin 1 from Platymeris rhadamanthus (Red spot assassin bug).